A 218-amino-acid chain; its full sequence is uncharacterized protein (218 aa).

A run of 4 helical transmembrane segments spans residues 10–30, 55–75, 147–167, and 175–195; these read IPPL…SLGI, IGVG…GYSI, VTGG…AGMA, and FSWI…ILLR.

This sequence belongs to the DedA family.

Its subcellular location is the cell membrane. This is an uncharacterized protein from Mycobacterium tuberculosis (strain CDC 1551 / Oshkosh).